Reading from the N-terminus, the 662-residue chain is Phosphomethylpyrimidine synthase (662 aa).

Substrate-binding positions include asparagine 235, methionine 264, tyrosine 293, histidine 329, 349-351 (SRG), 390-393 (DGMR), and glutamate 429. Histidine 433 serves as a coordination point for Zn(2+). A substrate-binding site is contributed by tyrosine 456. Zn(2+) is bound at residue histidine 497. Residues cysteine 577, cysteine 580, and cysteine 585 each coordinate [4Fe-4S] cluster.

This sequence belongs to the ThiC family. As to quaternary structure, homodimer. It depends on [4Fe-4S] cluster as a cofactor.

It catalyses the reaction 5-amino-1-(5-phospho-beta-D-ribosyl)imidazole + S-adenosyl-L-methionine = 4-amino-2-methyl-5-(phosphooxymethyl)pyrimidine + CO + 5'-deoxyadenosine + formate + L-methionine + 3 H(+). It participates in cofactor biosynthesis; thiamine diphosphate biosynthesis. Catalyzes the synthesis of the hydroxymethylpyrimidine phosphate (HMP-P) moiety of thiamine from aminoimidazole ribotide (AIR) in a radical S-adenosyl-L-methionine (SAM)-dependent reaction. The polypeptide is Phosphomethylpyrimidine synthase (Shewanella halifaxensis (strain HAW-EB4)).